The chain runs to 225 residues: MTMLLPLFILVGFIADYFVNAIAYHLSPLEDKTALTFRQVLVHFRQKKYAWHDTVPLILCVAAAIACALAPFTPIVTGALFLYFCFVLTLSVIDFRTQLLPDKLTLPLLWLGLVFNAQYGLIDLHDAVYGAVAGYGVLWCVYWGVWLVCHKEGLGYGDFKLLAAAGAWCGWQTLPMILLIASLGGIGYAIVSQLLQRRTITTIAFGPWLALGSMINLGYLAWISY.

The Periplasmic portion of the chain corresponds to 1–2 (MT). The helical transmembrane segment at 3–23 (MLLPLFILVGFIADYFVNAIA) threads the bilayer. Residues 24-67 (YHLSPLEDKTALTFRQVLVHFRQKKYAWHDTVPLILCVAAAIAC) lie on the Cytoplasmic side of the membrane. Residues 68–88 (ALAPFTPIVTGALFLYFCFVL) traverse the membrane as a helical segment. Over 89–103 (TLSVIDFRTQLLPDK) the chain is Periplasmic. The helical transmembrane segment at 104-124 (LTLPLLWLGLVFNAQYGLIDL) threads the bilayer. Over 125–127 (HDA) the chain is Cytoplasmic. A helical membrane pass occupies residues 128 to 148 (VYGAVAGYGVLWCVYWGVWLV). Residues 149-174 (CHKEGLGYGDFKLLAAAGAWCGWQTL) are Periplasmic-facing. A helical transmembrane segment spans residues 175–195 (PMILLIASLGGIGYAIVSQLL). The Cytoplasmic portion of the chain corresponds to 196 to 202 (QRRTITT). Residues 203-223 (IAFGPWLALGSMINLGYLAWI) form a helical membrane-spanning segment. The Periplasmic portion of the chain corresponds to 224–225 (SY).

The protein belongs to the peptidase A24 family.

It is found in the cell inner membrane. It catalyses the reaction Typically cleaves a -Gly-|-Phe- bond to release an N-terminal, basic peptide of 5-8 residues from type IV prepilin, and then N-methylates the new N-terminal amino group, the methyl donor being S-adenosyl-L-methionine.. In terms of biological role, plays a role in type II pseudopili formation by proteolytically removing the leader sequence from substrate proteins and subsequently monomethylating the alpha-amino group of the newly exposed N-terminal phenylalanine. Substrates include proteins required for biogenesis of the type II general secretory apparatus. The protein is Prepilin leader peptidase/N-methyltransferase (gspO) of Escherichia coli (strain K12).